Reading from the N-terminus, the 272-residue chain is Biglycan (272 aa).

An N-terminal signal peptide occupies residues 1 to 16 (MWPLWLLASLLALSQA). Residues 17–37 (LPFEQKAFWDFTLDDGLPMLN) constitute a propeptide that is removed on maturation. 2 O-linked (Xyl...) (glycosaminoglycan) serine glycosylation sites follow: Ser-42 and Ser-48. In terms of domain architecture, LRRNT spans 55–91 (ALPPTFSAMCPFGCHCHLRVVQCSDLGLKAVPKEISP). Disulfide bonds link Cys-64-Cys-70 and Cys-68-Cys-77. 8 LRR repeats span residues 92 to 113 (DTTL…DFKG), 116 to 137 (HLYA…PSAP), 138 to 161 (DGLK…DLPE), 162 to 183 (TLNE…DLLR), 186 to 209 (KLYR…SFLP), 210 to 232 (TLRE…PDLK), 233 to 254 (LLQV…DFCP), and 255 to 272 (VGFG…LFNN).

This sequence belongs to the small leucine-rich proteoglycan (SLRP) family. SLRP class I subfamily. As to quaternary structure, homodimer. Forms a ternary complex with MFAP2 and ELN. Post-translationally, the two attached glycosaminoglycan chains can be either chondroitin sulfate or dermatan sulfate. Found in several connective tissues, especially in articular cartilages.

It is found in the secreted. The protein localises to the extracellular space. Its subcellular location is the extracellular matrix. Its function is as follows. May be involved in collagen fiber assembly. In Sus scrofa (Pig), this protein is Biglycan (BGN).